Here is a 113-residue protein sequence, read N- to C-terminus: MFYLTFLLFGAICIGQIQLGQPVKFKVNEDGHRPSVYPIKYRVCGWEIFARYLAICHIRQRRRKRSIEADIITDKDTANSYFNRVKRGSGRFNIVEECCLEGCIPEEIREYCP.

Positions 1–22 (MFYLTFLLFGAICIGQIQLGQP) are cleaved as a signal peptide. The propeptide occupies 23-42 (VKFKVNEDGHRPSVYPIKYR). 3 cysteine pairs are disulfide-bonded: Cys-44-Cys-99, Cys-56-Cys-112, and Cys-98-Cys-103. Positions 62–87 (RRKRSIEADIITDKDTANSYFNRVKR) are cleaved as a propeptide — c peptide.

It belongs to the insulin family.

It localises to the secreted. Insulin decreases blood glucose concentration. May have evolved to activate insulin receptors (INSR) in vertebrates. Molecular docking studies reveals unique interaction with the human insulin receptor. In vivo, insulin-like peptide injection reduces blood glucose levels in two models of zebrafish diabetes (streptozotocin- and glucose-induced). Also shorter swimming distance of zebrafish larvae, an effect which is not observed with human insulin. The sequence is that of Insulin-like peptide 02 from Exaiptasia diaphana (Tropical sea anemone).